Reading from the N-terminus, the 395-residue chain is Scyllo-inosose 3-dehydrogenase (395 aa).

Position 66 (Cys66) interacts with Zn(2+). Residues Ser68 and His71 each act as charge relay system in the active site. Residues His95, Glu96, Cys131, Cys134, Cys137, Cys145, and Glu193 each contribute to the Zn(2+) site. Ile223, Glu243, and Arg248 together coordinate NAD(+).

Belongs to the zinc-containing alcohol dehydrogenase family. As to quaternary structure, homodimer. It depends on Zn(2+) as a cofactor.

It catalyses the reaction scyllo-inosose + NAD(+) = 3-dehydro-scyllo-inosose + NADH + H(+). It participates in polyol metabolism; myo-inositol metabolism. In terms of biological role, catalyzes the NAD(+)-dependent oxidation of scyllo-inosose (2-keto-myo-inositol) to 3-dehydro-scyllo-inosose (diketo-inositol), and thus probably functions in a myo-inositol degradation pathway together with IolG, IolN and IolO. Has no activity on myo-inositol, D-chiro-inositol and 1-keto-D-chiro-inositol. This chain is Scyllo-inosose 3-dehydrogenase, found in Thermotoga maritima (strain ATCC 43589 / DSM 3109 / JCM 10099 / NBRC 100826 / MSB8).